A 241-amino-acid polypeptide reads, in one-letter code: DnaA regulatory inactivator Hda (241 aa).

It belongs to the DnaA family. HdA subfamily. In terms of assembly, the active form seems to be an ADP-bound monomer. Forms the RIDA complex (regulatory inactivation of DnaA) of ATP-DnaA, ADP-Hda and the DNA-loaded beta sliding clamp (dnaN).

In terms of biological role, mediates the interaction of DNA replication initiator protein DnaA with DNA polymerase subunit beta sliding clamp (dnaN). Stimulates hydrolysis of ATP-DnaA to ADP-DnaA, rendering DnaA inactive for reinitiation, a process called regulatory inhibition of DnaA or RIDA. This Salmonella arizonae (strain ATCC BAA-731 / CDC346-86 / RSK2980) protein is DnaA regulatory inactivator Hda.